We begin with the raw amino-acid sequence, 1647 residues long: MARNAISDDEEDHELEDDDGEPVHGDPAEHDENDDEEDDDDVGNEYENDGFIVNDEDEEEEEEEDEERKDSDEERQKKKKKRKKKDEGLDEDDYLLLQDNNVKFKKRQYKRLKKAQREQGNGQGESSDDEFDSRGGTRRSAEDKIKDRLFDDVDVDDPPDDVGDEEDLVVEEDVVGSEDEMADFIVDEDDEHGPPKRGNSKKKKYRQGSDITAMRDANEIFGDVDELLTIRKKGLASNQRMERRLEDEFEPTVLSEKYMTGNDDEIRQLDIPERMQISEESTGSPPVDEISIEEESNWIYAQLASQLRESDGTFDGRGFSVNKDDIAKFLELHHVQKLEIPFIAMYRKEQCRSLLDTGDFDGANQGKKPETKWHKVFWMIHDLDKKWLLLRKRKMALHGYYTKRYEEESRRVYDETRLNLNQYLFESVIKSLKVAETEREVDDVDSKFNLHFPPGEIGVDEGQYKRPKRKSQYSICSKAGLWEVANKFGYSAEQLGLALSLEKLVDELEDAKETPEEMAKNFVCAMFENSLAVLKGARHMAAVEISCEPSVKKYVRGIYMENAVVSTSPTADGNTVIDSFHQFSGIKWLREKPLSKFEGAQWLLIQKGEEEKLLQVTFKLPENYMNRLISDCNEHYLSVGVSKYAQLWNEQRKLILEDALHAFLLPSMEKEARSLLTSRAKSRLLSEYGQALWNKVSAGPYQKKEMDINLDEEAAPRVMACCWGPGKPPNTFVMLDSSGEVLDVLYAGSLTSRSQNVNDQQRKKSDQDRVLKFMMDHQPHVVALGAVNLSCTRLKDDIYEVIFQMVEEKPRDVGHGMDDLSIVYVDESLPRLYENSRISGEQLPQQSGNVRRAVALGRYLQNPLAMVATLCGPGREILSWKLHPLENFLQLDEKYGMVEQVMVDITNQVGIDINLAASHDWFFSPLQFISGLGPRKAASLQRSLVRAGSIFVRKDLIMHGLGKKVFVNAAGFLRIRRSGLAASSSQFIDLLDDTRIHPESYSLAQELAKDIYDEDVRGDSNDDEDAIEMAIEHVRDRPASLRKVVLDEYLASKKRENKKETYSNIIRELSCGFQDWRIPFKEPSPDEEFYMISGETEDTIAEGRIVQASVRRLQNGRAICVLDSGLTGMLMKEDFSDDGRDIVDLADQLKEGDILTCKIKSIQKQRYQVFLICKESEMRNNRHQHNQNVDAYYHEDRNSLQLVKEKARKEKELVRKHFKSRMIVHPRFQNITADQATEYLSDKDFGESIVRPSSRGLNFLTLTLKIYDGVYAHKEIAEGGKENKDITSLQCIGKTLTIGEDTFEDLDEVMDRYVDPLVSHLKTMLNYRKFRKGTKSEVDDLLRIEKGENPSRIVYCFGISHEHPGTFILSYIRSTNPHHEYIGLYPKGFKFRKRMFEDIDRLVAYFQRHIDDPLQESAPSIRSIAAKVPMRSPADHGSSGGSGWGSSQSEGGWKGNSDRSGSGRGGEYRNGGGRDGHPSGAPRPYGGRGRGRGRGRRDDMNSDRQDGNGDWGNNDTGTADGGWGNSGGGGWGSESAGKKTGGGSTGGWGSESGGNKSDGAGSWGSGSGGGGSGGWGNDSGGKKSSEDGGFGSGSGGGGSDWGNESGGKKSSADGGWGSESGGKKSDGEGGWGNEPSSRKSDGGGGGW.

The disordered stretch occupies residues 1–209; that stretch reads MARNAISDDE…SKKKKYRQGS (209 aa). A compositionally biased stretch (acidic residues) spans 7 to 20; sequence SDDEEDHELEDDDG. Over residues 21-30 the composition is skewed to basic and acidic residues; the sequence is EPVHGDPAEH. The span at 31–67 shows a compositional bias: acidic residues; it reads DENDDEEDDDDVGNEYENDGFIVNDEDEEEEEEEDEE. The segment covering 103–114 has biased composition (basic residues); it reads KFKKRQYKRLKK. Basic and acidic residues predominate over residues 132–151; that stretch reads DSRGGTRRSAEDKIKDRLFD. Over residues 152-191 the composition is skewed to acidic residues; that stretch reads DVDVDDPPDDVGDEEDLVVEEDVVGSEDEMADFIVDEDDE. The region spanning 1103–1174 is the S1 motif domain; it reads GRIVQASVRR…QRYQVFLICK (72 aa). The disordered stretch occupies residues 1429–1647; the sequence is PMRSPADHGS…RKSDGGGGGW (219 aa). 2 repeat units span residues 1443-1444 and 1452-1453. The segment at 1443–1647 is 12 X 2 AA repeats of [WG]-[GW] repeats; it reads GWGSSQSEGG…RKSDGGGGGW (205 aa). A compositionally biased stretch (gly residues) spans 1462 to 1471; that stretch reads SGRGGEYRNG. The span at 1496-1507 shows a compositional bias: basic and acidic residues; the sequence is RRDDMNSDRQDG. 6 repeat units span residues 1511 to 1512, 1522 to 1523, 1530 to 1531, 1547 to 1548, 1563 to 1564, and 1574 to 1575. 4 stretches are compositionally biased toward gly residues: residues 1519-1532, 1539-1552, 1561-1579, and 1588-1600; these read ADGG…GGWG, KTGG…GSES, GSWG…GNDS, and GGFG…GGSD. A run of 4 repeats spans residues 1601–1602, 1615–1616, 1630–1631, and 1646–1647.

This sequence belongs to the SPT6 family. Interacts (via N-terminus) with IWS1. Expressed in shoot apical meristem, leaf primordia, vasculature of young leaves, inflorescence meristem, floral meristem, young floral organs, developing ovules and anthers.

The protein resides in the nucleus. Transcription elongation factor that enhances the transcription elongation by RNA polymerase II (RNAPII). Plays an important role in regulating embryo apical and basal patterning during early embryogenesis, partly through negative regulation of the transcription factors PHABULOSA and PHAVOLUTA. The protein is Transcription elongation factor SPT6 homolog of Arabidopsis thaliana (Mouse-ear cress).